Consider the following 244-residue polypeptide: Small ribosomal subunit protein eS4 (244 aa).

One can recognise an S4 RNA-binding domain in the interval 43-106 (LPLLLVVRDV…DENYLVLFDE (64 aa)).

The protein belongs to the eukaryotic ribosomal protein eS4 family.

The polypeptide is Small ribosomal subunit protein eS4 (Methanococcus maripaludis (strain C5 / ATCC BAA-1333)).